The following is a 192-amino-acid chain: Ion-translocating oxidoreductase complex subunit B (192 aa).

The hydrophobic stretch occupies residues 1–26 (MNAIWIAVVAVSLLGLAFGAILGYAS). In terms of domain architecture, 4Fe-4S spans 32–91 (EDDPVVEKIDEILPQSQCGQCGYPGCRPYAEAIGSQGEKINRCAPGGEAVMLKIATLLNV). [4Fe-4S] cluster is bound by residues C49, C52, C57, C74, C117, C120, C123, C127, C147, C150, C153, and C157. 4Fe-4S ferredoxin-type domains are found at residues 108–137 (MLAV…GATR) and 138–167 (AMHT…LRPV).

The protein belongs to the 4Fe4S bacterial-type ferredoxin family. RnfB subfamily. As to quaternary structure, the complex is composed of six subunits: RnfA, RnfB, RnfC, RnfD, RnfE and RnfG. Requires [4Fe-4S] cluster as cofactor.

It localises to the cell inner membrane. Its function is as follows. Part of a membrane-bound complex that couples electron transfer with translocation of ions across the membrane. This Citrobacter koseri (strain ATCC BAA-895 / CDC 4225-83 / SGSC4696) protein is Ion-translocating oxidoreductase complex subunit B.